The sequence spans 214 residues: MSSHLNGIGNIVPMVVEQSGMGERAFDIYSRLLRERIIFLGTPIDDAVANTIVAQLLFLDAEDSEKDIQLYINSPGGSVYAGMAIYDTIQQIRPDVVTICFGLAASMGAFLLTAGTKGKRMSLPDSRIMIHQPLGGAQGQAIDIEIQAREILYIKAQLNQLLANHTGQPLERIEADTDRDFFMSAEEAKNYGLIDQVISRQNLPTAGENVTIVK.

Residue S106 is the Nucleophile of the active site. H131 is a catalytic residue.

This sequence belongs to the peptidase S14 family. As to quaternary structure, fourteen ClpP subunits assemble into 2 heptameric rings which stack back to back to give a disk-like structure with a central cavity, resembling the structure of eukaryotic proteasomes.

It is found in the cytoplasm. It catalyses the reaction Hydrolysis of proteins to small peptides in the presence of ATP and magnesium. alpha-casein is the usual test substrate. In the absence of ATP, only oligopeptides shorter than five residues are hydrolyzed (such as succinyl-Leu-Tyr-|-NHMec, and Leu-Tyr-Leu-|-Tyr-Trp, in which cleavage of the -Tyr-|-Leu- and -Tyr-|-Trp bonds also occurs).. In terms of biological role, cleaves peptides in various proteins in a process that requires ATP hydrolysis. Has a chymotrypsin-like activity. Plays a major role in the degradation of misfolded proteins. This chain is ATP-dependent Clp protease proteolytic subunit 3, found in Trichormus variabilis (strain ATCC 29413 / PCC 7937) (Anabaena variabilis).